Reading from the N-terminus, the 686-residue chain is Potassium-transporting ATPase ATP-binding subunit 2 (686 aa).

Transmembrane regions (helical) follow at residues 37-57 (MFVVEIGAIISLALCFFPNLF), 64-84 (MILYNSLVFIILLLTLLFANF), 223-243 (LLVSLTIIFLIVIVSLYPMAI), and 255-275 (VALTVCLIPTTIGGLLSAIGI). The active-site 4-aspartylphosphate intermediate is Asp-306. Residues Asp-343, Glu-347, 376–383 (FTAQTRMS), and Lys-395 each bind ATP. Positions 518 and 522 each coordinate Mg(2+). Transmembrane regions (helical) follow at residues 588-608 (FAIIPAMFLAIIPQMQVLNIM), 616-636 (AILSALIFNAIIIPCLIPLAM), and 656-676 (VYGVGGMIVPFIGIKLIDLVI).

Belongs to the cation transport ATPase (P-type) (TC 3.A.3) family. Type IA subfamily. The system is composed of three essential subunits: KdpA, KdpB and KdpC.

The protein localises to the cell membrane. The enzyme catalyses K(+)(out) + ATP + H2O = K(+)(in) + ADP + phosphate + H(+). Part of the high-affinity ATP-driven potassium transport (or Kdp) system, which catalyzes the hydrolysis of ATP coupled with the electrogenic transport of potassium into the cytoplasm. This subunit is responsible for energy coupling to the transport system and for the release of the potassium ions to the cytoplasm. The chain is Potassium-transporting ATPase ATP-binding subunit 2 from Listeria innocua serovar 6a (strain ATCC BAA-680 / CLIP 11262).